A 362-amino-acid polypeptide reads, in one-letter code: Trans-enoyl reductase phm4 (362 aa).

50-53 (VDAK) contributes to the NADP(+) binding site. 136 to 143 (TCFMTCGL) lines the substrate pocket. NADP(+) is bound by residues 171-174 (ATAT), 194-197 (SPHS), Tyr212, and 259-260 (LD). Residue 280–284 (GPIML) participates in substrate binding. An NADP(+)-binding site is contributed by 349-350 (VN).

It belongs to the zinc-containing alcohol dehydrogenase family. In terms of assembly, monomer.

Its pathway is secondary metabolite biosynthesis. Functionally, trans-enoyl reductase; part of the gene cluster that mediates the biosynthesis of the trans-fused decalin-containing tetramic acid phomasetin, the stereochemical opposite of the HIV-1 integrase inhibitor equisetin. The PKS module of phm1 together with the enoylreductase phm4 catalyze the formation of the polyketide unit which is then conjugated to L-serine by the condensation domain of the phm1 NRPS module. Activity of the Dieckmann cyclase domain (RED) of phm1 results in release of the Dieckmann product intermediate. The Diels-Alderase phm7 then uses the Dieckmann product of phm1 as substrate and catalyzes the Diels-Alder cycloaddition to form the decalin ring of N-desmethylphomasetin. N-desmethylphomasetin is further methylated to phomasetin by the methyltransferase phm5. This Pyrenochaetopsis sp protein is Trans-enoyl reductase phm4.